The chain runs to 39 residues: Cytochrome b559 subunit beta (39 aa).

A helical membrane pass occupies residues 14-30 (WLAVHGLAVPTVSFLGS). Residue histidine 18 participates in heme binding.

It belongs to the PsbE/PsbF family. Heterodimer of an alpha subunit and a beta subunit. PSII is composed of 1 copy each of membrane proteins PsbA, PsbB, PsbC, PsbD, PsbE, PsbF, PsbH, PsbI, PsbJ, PsbK, PsbL, PsbM, PsbT, PsbX, PsbY, PsbZ, Psb30/Ycf12, at least 3 peripheral proteins of the oxygen-evolving complex and a large number of cofactors. It forms dimeric complexes. Heme b is required as a cofactor.

Its subcellular location is the plastid. It localises to the chloroplast thylakoid membrane. Functionally, this b-type cytochrome is tightly associated with the reaction center of photosystem II (PSII). PSII is a light-driven water:plastoquinone oxidoreductase that uses light energy to abstract electrons from H(2)O, generating O(2) and a proton gradient subsequently used for ATP formation. It consists of a core antenna complex that captures photons, and an electron transfer chain that converts photonic excitation into a charge separation. The sequence is that of Cytochrome b559 subunit beta from Lotus japonicus (Lotus corniculatus var. japonicus).